An 880-amino-acid chain; its full sequence is Beta-N-acetylglucosaminidase (880 aa).

The signal sequence occupies residues 1–27; it reads MKKRLIAPMLLSAASLAFFAMSGSAQA. SPOR domains follow at residues 70-149, 150-229, and 230-311; these read SGTT…VKAY, GAAQ…LKET, and VKGQ…YQQV. Repeat copies occupy residues 439-473 and 479-513. The 71-residue stretch at 630 to 700 folds into the SH3b domain; it reads TATSTVTADV…VDPNNFSRDS (71 aa).

Belongs to the glycosyl hydrolase 73 family. As to quaternary structure, homodimer.

The protein resides in the secreted. Its subcellular location is the cell wall. It catalyses the reaction an N(4)-(oligosaccharide-(1-&gt;3)-[oligosaccharide-(1-&gt;6)]-beta-D-Man-(1-&gt;4)-beta-D-GlcNAc-(1-&gt;4)-alpha-D-GlcNAc)-L-asparaginyl-[protein] + H2O = an oligosaccharide-(1-&gt;3)-[oligosaccharide-(1-&gt;6)]-beta-D-Man-(1-&gt;4)-D-GlcNAc + N(4)-(N-acetyl-beta-D-glucosaminyl)-L-asparaginyl-[protein]. Inhibited by diethyl pyrocarbonate, slightly by EDTA. Not inhibited by PMSF, diisopropyl fluorophosphate, 2-mercaptoethanol or N-ethylmaleimide. Its function is as follows. Cell wall hydrolase not involved in cell autolysis, competence, sporulation or germination. It hydrolyzes the beta-1,4 glycan bond between the N-acetylglucosaminyl and the N-acetylmuramoyl residues in the glycan chain. The polypeptide is Beta-N-acetylglucosaminidase (lytD) (Bacillus subtilis (strain 168)).